Consider the following 347-residue polypeptide: S-adenosylmethionine decarboxylase proenzyme (347 aa).

Catalysis depends on residues E10 and E13. Catalysis depends on S66, which acts as the Schiff-base intermediate with substrate; via pyruvic acid. S66 is subject to Pyruvic acid (Ser); by autocatalysis. C80 serves as the catalytic Proton donor; for catalytic activity. Residues S237 and H251 each act as proton acceptor; for processing activity in the active site.

This sequence belongs to the eukaryotic AdoMetDC family. Pyruvate is required as a cofactor. Post-translationally, is synthesized initially as an inactive proenzyme. Formation of the active enzyme involves a self-maturation process in which the active site pyruvoyl group is generated from an internal serine residue via an autocatalytic post-translational modification. Two non-identical subunits are generated from the proenzyme in this reaction, and the pyruvate is formed at the N-terminus of the alpha chain, which is derived from the carboxyl end of the proenzyme. The post-translation cleavage follows an unusual pathway, termed non-hydrolytic serinolysis, in which the side chain hydroxyl group of the serine supplies its oxygen atom to form the C-terminus of the beta chain, while the remainder of the serine residue undergoes an oxidative deamination to produce ammonia and the pyruvoyl group blocking the N-terminus of the alpha chain.

It carries out the reaction S-adenosyl-L-methionine + H(+) = S-adenosyl 3-(methylsulfanyl)propylamine + CO2. The protein operates within amine and polyamine biosynthesis; S-adenosylmethioninamine biosynthesis; S-adenosylmethioninamine from S-adenosyl-L-methionine: step 1/1. The chain is S-adenosylmethionine decarboxylase proenzyme (SamDC) from Drosophila melanogaster (Fruit fly).